Consider the following 374-residue polypeptide: N5-carboxyaminoimidazole ribonucleotide synthase (374 aa).

ATP-binding positions include Arg-108, Lys-148, 153 to 159 (GYDGKGQ), 183 to 186 (EQFL), Glu-191, His-214, and 266 to 267 (NE). The 185-residue stretch at 112–296 (KQTLQKAGSK…QFDTHILAVT (185 aa)) folds into the ATP-grasp domain.

Belongs to the PurK/PurT family. In terms of assembly, homodimer.

The enzyme catalyses 5-amino-1-(5-phospho-beta-D-ribosyl)imidazole + hydrogencarbonate + ATP = 5-carboxyamino-1-(5-phospho-D-ribosyl)imidazole + ADP + phosphate + 2 H(+). It functions in the pathway purine metabolism; IMP biosynthesis via de novo pathway; 5-amino-1-(5-phospho-D-ribosyl)imidazole-4-carboxylate from 5-amino-1-(5-phospho-D-ribosyl)imidazole (N5-CAIR route): step 1/2. Its function is as follows. Catalyzes the ATP-dependent conversion of 5-aminoimidazole ribonucleotide (AIR) and HCO(3)(-) to N5-carboxyaminoimidazole ribonucleotide (N5-CAIR). The protein is N5-carboxyaminoimidazole ribonucleotide synthase of Staphylococcus haemolyticus (strain JCSC1435).